The following is a 365-amino-acid chain: Chorismate synthase (365 aa).

Positions 48 and 54 each coordinate NADP(+). FMN contacts are provided by residues 131-133, 243-244, glycine 288, 303-307, and arginine 329; these read RSS, NA, and KPTSS.

Belongs to the chorismate synthase family. In terms of assembly, homotetramer. FMNH2 is required as a cofactor.

The catalysed reaction is 5-O-(1-carboxyvinyl)-3-phosphoshikimate = chorismate + phosphate. The protein operates within metabolic intermediate biosynthesis; chorismate biosynthesis; chorismate from D-erythrose 4-phosphate and phosphoenolpyruvate: step 7/7. Its function is as follows. Catalyzes the anti-1,4-elimination of the C-3 phosphate and the C-6 proR hydrogen from 5-enolpyruvylshikimate-3-phosphate (EPSP) to yield chorismate, which is the branch point compound that serves as the starting substrate for the three terminal pathways of aromatic amino acid biosynthesis. This reaction introduces a second double bond into the aromatic ring system. The protein is Chorismate synthase of Agrobacterium fabrum (strain C58 / ATCC 33970) (Agrobacterium tumefaciens (strain C58)).